Here is a 473-residue protein sequence, read N- to C-terminus: UDP-glycosyltransferase 91D2 (473 aa).

His-26 serves as the catalytic Proton acceptor. His-26 contributes to the an anthocyanidin binding site. Asp-121 (charge relay) is an active-site residue. Ala-344, Gln-346, His-361, Ser-366, and Glu-369 together coordinate UDP-alpha-D-glucose. An anthocyanidin is bound at residue Gly-384. UDP-alpha-D-glucose is bound by residues Asp-385 and Gln-386.

Belongs to the UDP-glycosyltransferase family.

It catalyses the reaction steviolmonoside + UDP-alpha-D-glucose = steviolbioside + UDP + H(+). The enzyme catalyses rubusoside + UDP-alpha-D-glucose = stevioside + UDP + H(+). It carries out the reaction stevioside + UDP-alpha-D-glucose = rebaudioside E + UDP + H(+). The catalysed reaction is rebaudioside A + UDP-alpha-D-glucose = rebaudioside D + UDP + H(+). Involved in the biosynthesis of steviol glycosides in leaves. Converts the mono-glycoside steviolmonoside to the bi-glycoside steviolbioside. Converts the bi-glycoside rubusoside to the tri-glycoside stevioside. Converts the tri-glycoside stevioside to the tetra-glycoside rebaudioside E. Converts the tetra-glycoside rebaudioside A to the penta-glycoside rebaudioside E. The polypeptide is UDP-glycosyltransferase 91D2 (Stevia rebaudiana (Stevia)).